Here is a 134-residue protein sequence, read N- to C-terminus: Small ribosomal subunit protein uS8c (134 aa).

It belongs to the universal ribosomal protein uS8 family. In terms of assembly, part of the 30S ribosomal subunit.

It is found in the plastid. It localises to the chloroplast. In terms of biological role, one of the primary rRNA binding proteins, it binds directly to 16S rRNA central domain where it helps coordinate assembly of the platform of the 30S subunit. The sequence is that of Small ribosomal subunit protein uS8c (rps8) from Phaseolus angularis (Azuki bean).